We begin with the raw amino-acid sequence, 432 residues long: Leucine-rich repeat-containing protein ODA7 (432 aa).

LRR repeat units lie at residues 47-68 (NLKA…PPLA), 69-90 (DLKC…EAVP), 91-112 (GLDT…ACCP), 113-134 (ALRT…AHLA), and 138-159 (ALQT…DILK). Residues 173–211 (PVVSNIKNYRKVLVTSIPSLTYLDDRPVFDNERKIAQAW) enclose the LRRCT domain. A coiled-coil region spans residues 212-243 (LEGGLEGERAMRNQLKEEEEERSRKNHEFMMQ). 2 disordered regions span residues 297–332 (RPGE…AAAE) and 368–432 (EELD…NDLD). Low complexity-rich tracts occupy residues 323–332 (GAWGSGAAAE) and 407–425 (VAAA…ISAA).

It belongs to the DNAAF1 family. As to quaternary structure, interacts with both outer row and I1 inner row dyneins.

It is found in the cytoplasm. The protein localises to the cytoskeleton. Its subcellular location is the cilium axoneme. Functionally, cilium-specific protein required for cilia structures. Axonemal dynein-associated protein that participates in a structural link between inner and outer row dyneins. This Chlamydomonas reinhardtii (Chlamydomonas smithii) protein is Leucine-rich repeat-containing protein ODA7 (ODA7).